A 736-amino-acid chain; its full sequence is Phosphoribosylformylglycinamidine synthase subunit PurL (736 aa).

Residue His48 is part of the active site. Residues Tyr51 and Lys90 each coordinate ATP. Mg(2+) is bound at residue Glu92. Substrate-binding positions include 93-96 and Arg115; that span reads SHNH. Residue His94 is the Proton acceptor of the active site. Asp116 contributes to the Mg(2+) binding site. Substrate is bound at residue Gln239. Position 267 (Asp267) interacts with Mg(2+). 311–313 provides a ligand contact to substrate; it reads ESQ. Residues Asp492 and Gly529 each contribute to the ATP site. Asn530 contributes to the Mg(2+) binding site. Ser532 is a substrate binding site.

Belongs to the FGAMS family. As to quaternary structure, monomer. Part of the FGAM synthase complex composed of 1 PurL, 1 PurQ and 2 PurS subunits.

The protein localises to the cytoplasm. It carries out the reaction N(2)-formyl-N(1)-(5-phospho-beta-D-ribosyl)glycinamide + L-glutamine + ATP + H2O = 2-formamido-N(1)-(5-O-phospho-beta-D-ribosyl)acetamidine + L-glutamate + ADP + phosphate + H(+). Its pathway is purine metabolism; IMP biosynthesis via de novo pathway; 5-amino-1-(5-phospho-D-ribosyl)imidazole from N(2)-formyl-N(1)-(5-phospho-D-ribosyl)glycinamide: step 1/2. In terms of biological role, part of the phosphoribosylformylglycinamidine synthase complex involved in the purines biosynthetic pathway. Catalyzes the ATP-dependent conversion of formylglycinamide ribonucleotide (FGAR) and glutamine to yield formylglycinamidine ribonucleotide (FGAM) and glutamate. The FGAM synthase complex is composed of three subunits. PurQ produces an ammonia molecule by converting glutamine to glutamate. PurL transfers the ammonia molecule to FGAR to form FGAM in an ATP-dependent manner. PurS interacts with PurQ and PurL and is thought to assist in the transfer of the ammonia molecule from PurQ to PurL. The protein is Phosphoribosylformylglycinamidine synthase subunit PurL of Bradyrhizobium sp. (strain ORS 278).